Here is a 593-residue protein sequence, read N- to C-terminus: Arginine--tRNA ligase (593 aa).

Positions 138–148 (ANPTGPLHVGH) match the 'HIGH' region motif.

It belongs to the class-I aminoacyl-tRNA synthetase family. As to quaternary structure, monomer.

It is found in the cytoplasm. It catalyses the reaction tRNA(Arg) + L-arginine + ATP = L-arginyl-tRNA(Arg) + AMP + diphosphate. The polypeptide is Arginine--tRNA ligase (Burkholderia ambifaria (strain ATCC BAA-244 / DSM 16087 / CCUG 44356 / LMG 19182 / AMMD) (Burkholderia cepacia (strain AMMD))).